We begin with the raw amino-acid sequence, 316 residues long: Serpentine receptor class delta-48 (316 aa).

Helical transmembrane passes span 8-28, 42-62, 89-109, 127-147, 185-205, 236-256, and 269-289; these read FFYI…IFVI, FLLC…LLQL, LFYV…FITI, VVII…QIDL, FLLT…GFFI, TLQS…YFVV, and ILPV…LYSV.

Belongs to the nematode receptor-like protein srd family.

It is found in the membrane. The polypeptide is Serpentine receptor class delta-48 (srd-48) (Caenorhabditis elegans).